The following is a 446-amino-acid chain: tRNA modification GTPase MnmE (446 aa).

3 residues coordinate (6S)-5-formyl-5,6,7,8-tetrahydrofolate: Arg22, Glu80, and Lys119. A TrmE-type G domain is found at 215–370 (GLSLVIAGRP…LKKVIKQVVG (156 aa)). Asn225 provides a ligand contact to K(+). Residues 225-230 (NAGKST), 244-250 (TEIAGTT), and 269-272 (DTAG) each bind GTP. Mg(2+) is bound at residue Ser229. Residues Thr244, Ile246, and Thr249 each contribute to the K(+) site. Mg(2+) is bound at residue Thr250. A (6S)-5-formyl-5,6,7,8-tetrahydrofolate-binding site is contributed by Lys446.

Belongs to the TRAFAC class TrmE-Era-EngA-EngB-Septin-like GTPase superfamily. TrmE GTPase family. Homodimer. Heterotetramer of two MnmE and two MnmG subunits. It depends on K(+) as a cofactor.

The protein localises to the cytoplasm. Its function is as follows. Exhibits a very high intrinsic GTPase hydrolysis rate. Involved in the addition of a carboxymethylaminomethyl (cmnm) group at the wobble position (U34) of certain tRNAs, forming tRNA-cmnm(5)s(2)U34. The protein is tRNA modification GTPase MnmE of Legionella pneumophila (strain Corby).